Reading from the N-terminus, the 20-residue chain is Conotoxin PnMLKM-D0211 (20 aa).

Residues 1–3 (VKR) constitute a propeptide that is removed on maturation. Intrachain disulfides connect Cys4-Cys18, Cys5-Cys14, and Cys10-Cys17. Pro16 is modified (4-hydroxyproline). A Tryptophan amide modification is found at Trp19.

Belongs to the conotoxin M superfamily. As to expression, expressed by the venom duct.

It localises to the secreted. The chain is Conotoxin PnMLKM-D0211 from Conus pennaceus (Feathered cone).